Reading from the N-terminus, the 346-residue chain is Dihydroorotase (346 aa).

Residues His-14 and His-16 each coordinate Zn(2+). Residues 16-18 (HLR) and Asn-42 each bind substrate. The Zn(2+) site is built by Lys-100, His-137, and His-175. Lys-100 bears the N6-carboxylysine mark. His-137 lines the substrate pocket. Leu-220 is a substrate binding site. Residue Asp-248 participates in Zn(2+) binding. The active site involves Asp-248. The substrate site is built by His-252 and Ala-264.

It belongs to the metallo-dependent hydrolases superfamily. DHOase family. Class II DHOase subfamily. In terms of assembly, homodimer. It depends on Zn(2+) as a cofactor.

It catalyses the reaction (S)-dihydroorotate + H2O = N-carbamoyl-L-aspartate + H(+). The protein operates within pyrimidine metabolism; UMP biosynthesis via de novo pathway; (S)-dihydroorotate from bicarbonate: step 3/3. Its function is as follows. Catalyzes the reversible cyclization of carbamoyl aspartate to dihydroorotate. In Novosphingobium aromaticivorans (strain ATCC 700278 / DSM 12444 / CCUG 56034 / CIP 105152 / NBRC 16084 / F199), this protein is Dihydroorotase.